Consider the following 319-residue polypeptide: F-box only protein 8 (319 aa).

Residues 68 to 111 enclose the F-box domain; the sequence is FINLEMLPPELSFTILSYLNATDLCLASCVWQDLANDELLWQGL. The SEC7 domain maps to 146-276; the sequence is FNANPDEGVN…LILLSIDLTS (131 aa).

Functionally, may promote guanine-nucleotide exchange on an ARF. Promotes the activation of ARF through replacement of GDP with GTP (Potential). The polypeptide is F-box only protein 8 (FBXO8) (Bos taurus (Bovine)).